Reading from the N-terminus, the 177-residue chain is Large ribosomal subunit protein uL6 (177 aa).

Belongs to the universal ribosomal protein uL6 family. In terms of assembly, part of the 50S ribosomal subunit.

In terms of biological role, this protein binds to the 23S rRNA, and is important in its secondary structure. It is located near the subunit interface in the base of the L7/L12 stalk, and near the tRNA binding site of the peptidyltransferase center. This Afipia carboxidovorans (strain ATCC 49405 / DSM 1227 / KCTC 32145 / OM5) (Oligotropha carboxidovorans) protein is Large ribosomal subunit protein uL6.